A 190-amino-acid polypeptide reads, in one-letter code: GTP cyclohydrolase 1 (190 aa).

Residues Cys75, His78, and Cys146 each coordinate Zn(2+).

The protein belongs to the GTP cyclohydrolase I family. In terms of assembly, homomer.

The enzyme catalyses GTP + H2O = 7,8-dihydroneopterin 3'-triphosphate + formate + H(+). The protein operates within cofactor biosynthesis; 7,8-dihydroneopterin triphosphate biosynthesis; 7,8-dihydroneopterin triphosphate from GTP: step 1/1. The polypeptide is GTP cyclohydrolase 1 (Campylobacter concisus (strain 13826)).